The following is a 261-amino-acid chain: Thiazole synthase (261 aa).

Catalysis depends on Lys-101, which acts as the Schiff-base intermediate with DXP. 1-deoxy-D-xylulose 5-phosphate contacts are provided by residues Gly-162, 188-189 (AG), and 210-211 (NT).

The protein belongs to the ThiG family. As to quaternary structure, homotetramer. Forms heterodimers with either ThiH or ThiS.

The protein resides in the cytoplasm. The enzyme catalyses [ThiS sulfur-carrier protein]-C-terminal-Gly-aminoethanethioate + 2-iminoacetate + 1-deoxy-D-xylulose 5-phosphate = [ThiS sulfur-carrier protein]-C-terminal Gly-Gly + 2-[(2R,5Z)-2-carboxy-4-methylthiazol-5(2H)-ylidene]ethyl phosphate + 2 H2O + H(+). Its pathway is cofactor biosynthesis; thiamine diphosphate biosynthesis. Functionally, catalyzes the rearrangement of 1-deoxy-D-xylulose 5-phosphate (DXP) to produce the thiazole phosphate moiety of thiamine. Sulfur is provided by the thiocarboxylate moiety of the carrier protein ThiS. In vitro, sulfur can be provided by H(2)S. The polypeptide is Thiazole synthase (Aromatoleum aromaticum (strain DSM 19018 / LMG 30748 / EbN1) (Azoarcus sp. (strain EbN1))).